A 197-amino-acid polypeptide reads, in one-letter code: HTH-type transcriptional regulator BetI (197 aa).

The 61-residue stretch at 8–68 (PIRRSQLIHA…ATMRHLLSAL (61 aa)) folds into the HTH tetR-type domain. The segment at residues 31–50 (SIALIARLAGVSNGIISHYF) is a DNA-binding region (H-T-H motif).

The protein operates within amine and polyamine biosynthesis; betaine biosynthesis via choline pathway [regulation]. Repressor involved in the biosynthesis of the osmoprotectant glycine betaine. It represses transcription of the choline transporter BetT and the genes of BetAB involved in the synthesis of glycine betaine. This is HTH-type transcriptional regulator BetI from Pseudomonas aeruginosa (strain LESB58).